Here is a 350-residue protein sequence, read N- to C-terminus: Geranylgeranyl pyrophosphate synthase (350 aa).

Residues lysine 66, arginine 69, and histidine 98 each contribute to the isopentenyl diphosphate site. Residues aspartate 105 and aspartate 109 each contribute to the Mg(2+) site. Dimethylallyl diphosphate is bound at residue arginine 114. Arginine 115 is a binding site for isopentenyl diphosphate. Residues lysine 200, threonine 201, glutamine 236, asparagine 243, and lysine 263 each coordinate dimethylallyl diphosphate.

The protein belongs to the FPP/GGPP synthase family. It depends on Mg(2+) as a cofactor.

It carries out the reaction isopentenyl diphosphate + dimethylallyl diphosphate = (2E)-geranyl diphosphate + diphosphate. The catalysed reaction is isopentenyl diphosphate + (2E)-geranyl diphosphate = (2E,6E)-farnesyl diphosphate + diphosphate. The enzyme catalyses isopentenyl diphosphate + (2E,6E)-farnesyl diphosphate = (2E,6E,10E)-geranylgeranyl diphosphate + diphosphate. The protein operates within secondary metabolite biosynthesis; terpenoid biosynthesis. Geranylgeranyl pyrophosphate synthase; part of the gene cluster that mediates the biosynthesis of pleuromutilin, a tricyclic diterpene showing antibacterial properties. The geranylgeranyl diphosphate (GGPP) synthase ple4 catalyzes the first step in pleuromutilin biosynthesis. GGPP is then substrate of the premutilin synthase (PS) ple3 to yield premutilin. Premutilin synthase is a bifunctional enzyme composed of the fusion of a class II diterpene cyclase (DTC) and a class I diterpene synthase (DTS), with the corresponding domains and active sites containing characteristic aspartate-rich motifs. GGPP is first converted to mutildienyl-diphosphate (MPP) at the class II DTC site. MPP is subsequently further cyclized at the class I DTS site, followed by a 1,5-hydride shift and addition of water prior to terminating deprotonation, to yield premutilin. The cytochrome P450 monooxygenases ple5 and ple6 hydroxylate premutilin at C-11 and C-3, respectively, producing 11-hydroxypremutilin and 3-hydroxypremutilin. The combination of the actions of both ple5 and ple6 leads to the production of 3,11-dihydroxypremutilin. The short chain dehydrogenase ple7 further converts 3,11-dihydroxypremutilin into mutilin. The acetyltransferase ple2 then acetylates mutilin to produce 14-O-acetylmutilin. Finally, the cytochrome P450 monooxygenase ple1 catalyzes hydroxylation on the alpha position of the acetyl side chain of 14-O-acetylmutilin to yield pleuromutilin. This is Geranylgeranyl pyrophosphate synthase from Rhodocybe pseudopiperita (Clitopilus pseudopiperitus).